Reading from the N-terminus, the 448-residue chain is UDP-N-acetylmuramoylalanine--D-glutamate ligase (448 aa).

ATP is bound at residue 112–118 (GSNAKST).

Belongs to the MurCDEF family.

The protein resides in the cytoplasm. The enzyme catalyses UDP-N-acetyl-alpha-D-muramoyl-L-alanine + D-glutamate + ATP = UDP-N-acetyl-alpha-D-muramoyl-L-alanyl-D-glutamate + ADP + phosphate + H(+). It functions in the pathway cell wall biogenesis; peptidoglycan biosynthesis. Functionally, cell wall formation. Catalyzes the addition of glutamate to the nucleotide precursor UDP-N-acetylmuramoyl-L-alanine (UMA). This chain is UDP-N-acetylmuramoylalanine--D-glutamate ligase, found in Acinetobacter baylyi (strain ATCC 33305 / BD413 / ADP1).